A 410-amino-acid chain; its full sequence is Class E basic helix-loop-helix protein 41 (410 aa).

Residue K31 forms a Glycyl lysine isopeptide (Lys-Gly) (interchain with G-Cter in SUMO2) linkage. A bHLH domain is found at 44–99 (TYKLPHRLIEKKRRDRINECIAQLKDLLPEHLKLTTLGHLEKAVVLELTLKHLKAL). Residue K121 forms a Glycyl lysine isopeptide (Lys-Gly) (interchain with G-Cter in SUMO2) linkage. One can recognise an Orange domain in the interval 131-166 (FHSGFQTCAKEVLQYLARFESWTPREPRCAQLVSHL). Disordered regions lie at residues 209 to 255 (IQRT…KRPK) and 360 to 410 (GATA…KDAP). K240 participates in a covalent cross-link: Glycyl lysine isopeptide (Lys-Gly) (interchain with G-Cter in SUMO2).

Homodimer. Heterodimer with BHLHE40/DEC1. Interacts with CIART. Interacts with BMAL1. Interacts with RXRA. Interacts with NR0B2 and HNF1A. As to expression, expressed in skeletal muscle, brain and lung.

It is found in the nucleus. Its function is as follows. Transcriptional repressor involved in the regulation of the circadian rhythm by negatively regulating the activity of the clock genes and clock-controlled genes. Acts as the negative limb of a novel autoregulatory feedback loop (DEC loop) which differs from the one formed by the PER and CRY transcriptional repressors (PER/CRY loop). Both these loops are interlocked as it represses the expression of PER1 and in turn is repressed by PER1/2 and CRY1/2. Represses the activity of the circadian transcriptional activator: CLOCK-BMAL1 heterodimer by competing for the binding to E-box elements (5'-CACGTG-3') found within the promoters of its target genes. Negatively regulates its own expression and the expression of DBP and BHLHE41/DEC2. Acts as a corepressor of RXR and the RXR-LXR heterodimers and represses the ligand-induced RXRA/B/G, NR1H3/LXRA, NR1H4 and VDR transactivation activity. Inhibits HNF1A-mediated transactivation of CYP1A2, CYP2E1 and CYP3A11. The sequence is that of Class E basic helix-loop-helix protein 41 (Bhlhe41) from Mus musculus (Mouse).